The sequence spans 85 residues: Small ribosomal subunit protein bS20 (85 aa).

Positions 1–22 are disordered; that stretch reads MPQIKSAIKRVKTQNATNKRNA. Positions 13–22 are enriched in polar residues; sequence TQNATNKRNA.

The protein belongs to the bacterial ribosomal protein bS20 family.

In terms of biological role, binds directly to 16S ribosomal RNA. The chain is Small ribosomal subunit protein bS20 from Lactobacillus acidophilus (strain ATCC 700396 / NCK56 / N2 / NCFM).